The following is a 963-amino-acid chain: Copalyl diphosphate synthase (963 aa).

Residues 1–539 (MSPMDLQESA…EAYILAALKR (539 aa)) are type II terpene cyclase (TC). The substrate binding stretch occupies residues 227-292 (ATQWDDECED…FIEKIRSYLH (66 aa)). Mg(2+) is bound by residues aspartate 311 and aspartate 314. A DXDD motif is present at residues 311–314 (DADD). An NSE/DTE motif is present at residues 333 to 341 (AMLKEFEEE). Substrate contacts are provided by residues 337–341 (EFEEE) and 521–522 (VT). Positions 540–659 (AADLPDENAE…SVSVHTDHSD (120 aa)) are linker. Positions 627-648 (TNGHYVNGTNHETPLTNGISNG) are enriched in polar residues. Positions 627 to 657 (TNGHYVNGTNHETPLTNGISNGDSVSVHTDH) are disordered. The geranylfarnesyl diphosphate synthase (PT) stretch occupies residues 660 to 963 (SYYQRSDWTA…KILARMSLEL (304 aa)). Isopentenyl diphosphate is bound by residues lysine 688, arginine 691, and histidine 720. Residues aspartate 727 and aspartate 731 each coordinate Mg(2+). The DDXXD 1 motif lies at 727–731 (DDIQD). Arginine 736 provides a ligand contact to dimethylallyl diphosphate. Arginine 737 is a binding site for isopentenyl diphosphate. Dimethylallyl diphosphate is bound by residues lysine 814, threonine 815, glutamine 848, asparagine 855, lysine 865, and lysine 875. The DDXXD 2 motif lies at 851–855 (DDYLN).

This sequence in the N-terminal section; belongs to the terpene synthase family. It in the C-terminal section; belongs to the FPP/GGPP synthase family. Homohexamer. Mg(2+) is required as a cofactor.

The enzyme catalyses isopentenyl diphosphate + (2E,6E)-farnesyl diphosphate = (2E,6E,10E)-geranylgeranyl diphosphate + diphosphate. It catalyses the reaction (2E,6E,10E)-geranylgeranyl diphosphate = (+)-copalyl diphosphate. Bifunctional terpene synthase that possesses both prenyltransferase and type II terpene cyclase activity, converting isopentenyl diphosphate (IPP) and dimethylallyl diphosphate (DMAPP) into geranylgeranyl diphosphate (GGPP) and further converting GGPP into copalyl diphosphate, respectively. In Talaromyces verruculosus (Penicillium verruculosum), this protein is Copalyl diphosphate synthase.